We begin with the raw amino-acid sequence, 356 residues long: D-amino-acid oxidase (356 aa).

A signal peptide spans 1 to 17 (MAKIVVIGAGVAGLTTA). A9, S44, G48, and N50 together coordinate FAD. Anthranilate is bound at residue F54. An FAD-binding site is contributed by V171. N192 carries an N-linked (GlcNAc...) asparagine glycan. Y243 is a binding site for anthranilate. Y243 contacts (R)-lactate. N262 is a glycosylation site (N-linked (GlcNAc...) asparagine). 5 residues coordinate FAD: R302, A329, G332, Y333, and Q334. R302 lines the anthranilate pocket. R302 is a (R)-lactate binding site.

It belongs to the DAMOX/DASOX family. Requires FAD as cofactor.

It localises to the peroxisome matrix. The catalysed reaction is a D-alpha-amino acid + O2 + H2O = a 2-oxocarboxylate + H2O2 + NH4(+). The enzyme catalyses D-alanine + O2 + H2O = pyruvate + H2O2 + NH4(+). It carries out the reaction D-serine + O2 + H2O = 3-hydroxypyruvate + H2O2 + NH4(+). It catalyses the reaction D-phenylalanine + O2 + H2O = 3-phenylpyruvate + H2O2 + NH4(+). The catalysed reaction is D-lysine + O2 + H2O = 6-amino-2-oxohexanoate + H2O2 + NH4(+). The enzyme catalyses D-tyrosine + O2 + H2O = 3-(4-hydroxyphenyl)pyruvate + H2O2 + NH4(+). It carries out the reaction D-methionine + O2 + H2O = 4-methylsulfanyl-2-oxobutanoate + H2O2 + NH4(+). It catalyses the reaction D-tryptophan + O2 + H2O = indole-3-pyruvate + H2O2 + NH4(+). The catalysed reaction is D-leucine + O2 + H2O = 4-methyl-2-oxopentanoate + H2O2 + NH4(+). The enzyme catalyses D-valine + O2 + H2O = 3-methyl-2-oxobutanoate + H2O2 + NH4(+). Its activity is regulated as follows. Inhibited by benzoate and hypochlorite. Functionally, catalyzes the oxidative deamination of D-amino acids with broad substrate specificity. Enables the organism to utilize D-amino acids as a source of nutrients. The sequence is that of D-amino-acid oxidase from Trigonopsis variabilis (Yeast).